The following is a 236-amino-acid chain: uncharacterized protein (236 aa).

This is an uncharacterized protein from Ureaplasma parvum serovar 3 (strain ATCC 700970).